We begin with the raw amino-acid sequence, 1894 residues long: Plexin-A2 (1894 aa).

The N-terminal stretch at 1–34 (MEQRRPWPRALEVDSRSVVLLSVVWVLLAPPAAG) is a signal peptide. The 474-residue stretch at 35-508 (MPQFSTFHSE…SERQVTRVPV (474 aa)) folds into the Sema domain. The Extracellular segment spans residues 35-1237 (MPQFSTFHSE…VISDSLLTLP (1203 aa)). N-linked (GlcNAc...) asparagine glycosylation is found at Asn-76 and Asn-91. Disulfide bonds link Cys-94–Cys-103, Cys-129–Cys-137, Cys-284–Cys-405, Cys-300–Cys-356, Cys-374–Cys-393, Cys-511–Cys-528, Cys-517–Cys-559, Cys-520–Cys-537, Cys-531–Cys-543, and Cys-594–Cys-613. Asn-327 carries N-linked (GlcNAc...) asparagine glycosylation. N-linked (GlcNAc...) asparagine glycans are attached at residues Asn-598, Asn-696, and Asn-756. 4 IPT/TIG domains span residues 858-951 (PQIT…QYTF), 954-1037 (PSVL…QFEY), 1041-1139 (PRVQ…KFIY), and 1143-1228 (PTFE…SVSV). N-linked (GlcNAc...) asparagine glycosylation is present at Asn-1205. Residues 1238–1258 (AIVSIAAGGSLLLIIVIIVLI) form a helical membrane-spanning segment. Residues 1259 to 1894 (AYKRKSREND…QLINAMSIES (636 aa)) lie on the Cytoplasmic side of the membrane. Residues 1261–1310 (KRKSRENDLTLKRLQMQMDNLESRVALECKEAFAELQTDINELTSDLDRS) are a coiled coil. At Ser-1612 the chain carries Phosphoserine.

The protein belongs to the plexin family. Homodimer. The PLXNA2 homodimer interacts with a SEMA6A homodimer, giving rise to a heterotetramer. Interacts directly with NRP1 and NRP2. Interacts with RND1. In terms of tissue distribution, detected in fetal brain.

It is found in the cell membrane. Its function is as follows. Coreceptor for SEMA3A and SEMA6A. Necessary for signaling by SEMA6A and class 3 semaphorins and subsequent remodeling of the cytoskeleton. Plays a role in axon guidance, invasive growth and cell migration. Class 3 semaphorins bind to a complex composed of a neuropilin and a plexin. The plexin modulates the affinity of the complex for specific semaphorins, and its cytoplasmic domain is required for the activation of down-stream signaling events in the cytoplasm. The polypeptide is Plexin-A2 (PLXNA2) (Homo sapiens (Human)).